The primary structure comprises 444 residues: ATP-dependent protease ATPase subunit HslU (444 aa).

Residues Val18, 60–65 (GVGKTE), Asp258, Glu323, and Arg395 each bind ATP.

The protein belongs to the ClpX chaperone family. HslU subfamily. A double ring-shaped homohexamer of HslV is capped on each side by a ring-shaped HslU homohexamer. The assembly of the HslU/HslV complex is dependent on binding of ATP.

The protein localises to the cytoplasm. ATPase subunit of a proteasome-like degradation complex; this subunit has chaperone activity. The binding of ATP and its subsequent hydrolysis by HslU are essential for unfolding of protein substrates subsequently hydrolyzed by HslV. HslU recognizes the N-terminal part of its protein substrates and unfolds these before they are guided to HslV for hydrolysis. The chain is ATP-dependent protease ATPase subunit HslU from Thioalkalivibrio sulfidiphilus (strain HL-EbGR7).